A 257-amino-acid polypeptide reads, in one-letter code: MSLEIVPFVVAIPARFSASRLPGKPLRLLGGRPLIHRVAERALSAGAREVWVATDDVRIAEAVASLDGVHVAMTANTHLSGSDRLAECARIAGWDPEMCVVNLQGDEPFAPAAGIRAVAALLHHSNADMATLATTIDKSEDLFNPNIVKLVCNAHGEALYFSRAPIPWNRDTFATTPEPTPLGPWLRHIGLYACNAGFLQRFTTMQPGTLEQIESLEQLRVLEAGHRIAVRITPEHFPPGIDTPEDLARAEKALEDV.

Belongs to the KdsB family.

The protein localises to the cytoplasm. It catalyses the reaction 3-deoxy-alpha-D-manno-oct-2-ulosonate + CTP = CMP-3-deoxy-beta-D-manno-octulosonate + diphosphate. The protein operates within nucleotide-sugar biosynthesis; CMP-3-deoxy-D-manno-octulosonate biosynthesis; CMP-3-deoxy-D-manno-octulosonate from 3-deoxy-D-manno-octulosonate and CTP: step 1/1. Its pathway is bacterial outer membrane biogenesis; lipopolysaccharide biosynthesis. In terms of biological role, activates KDO (a required 8-carbon sugar) for incorporation into bacterial lipopolysaccharide in Gram-negative bacteria. This is 3-deoxy-manno-octulosonate cytidylyltransferase from Xylella fastidiosa (strain 9a5c).